A 25-amino-acid polypeptide reads, in one-letter code: Non-specific lipid-transfer protein 3 (25 aa).

As to expression, seeds (at protein level).

Functionally, plant non-specific lipid-transfer proteins transfer phospholipids as well as galactolipids across membranes. May play a role in wax or cutin deposition in the cell walls of expanding epidermal cells and certain secretory tissues. Has antibacterial and antifungal activity. Displays antibacterial activity towards both Gram-negative bacteria, P.carotovorum (IC(50)=11.5 uM) and P.syringae (IC(50)=12.0 uM), and Gram-positive bacterium C.michiganensis subsp michiganense (IC(50)=11.2 uM). Also displays antifungal activity towards A.niger VKM F-33 (IC(50)=1.05 uM) and B.cinerea TSKHA (IC(50)=1.88 uM) and relatively moderate activity towards B.sorokiniana VKM F-1448 (IC(50)=1.55 uM). Displays some inhibitory activity towards P.infestans OSV12. In Nigella sativa (Black cumin), this protein is Non-specific lipid-transfer protein 3.